The following is a 31-amino-acid chain: MPRRRRASRPVRRRRRPRVSRRRRRGGRRRR.

Positions 1–31 (MPRRRRASRPVRRRRRPRVSRRRRRGGRRRR) are disordered.

In terms of tissue distribution, testis.

It localises to the nucleus. The protein resides in the chromosome. In terms of biological role, protamines substitute for histones in the chromatin of sperm during the haploid phase of spermatogenesis. They compact sperm DNA into a highly condensed, stable and inactive complex. The chain is Protamine CIII from Oncorhynchus mykiss (Rainbow trout).